The chain runs to 955 residues: Mediator of RNA polymerase II transcription subunit 16 (955 aa).

Residues 855 to 874 form a disordered region; the sequence is ALPETNANANANQNGKSSTQ. Residues 857–873 are compositionally biased toward polar residues; that stretch reads PETNANANANQNGKSST.

This sequence belongs to the Mediator complex subunit 16 family. Component of the Mediator complex.

It localises to the nucleus. In terms of biological role, component of the Mediator complex, a coactivator involved in the regulated transcription of nearly all RNA polymerase II-dependent genes. Mediator functions as a bridge to convey information from gene-specific regulatory proteins to the basal RNA polymerase II transcription machinery. Mediator is recruited to promoters by direct interactions with regulatory proteins and serves as a scaffold for the assembly of a functional preinitiation complex with RNA polymerase II and the general transcription factors. This is Mediator of RNA polymerase II transcription subunit 16 (sin4) from Aspergillus fumigatus (strain ATCC MYA-4609 / CBS 101355 / FGSC A1100 / Af293) (Neosartorya fumigata).